Reading from the N-terminus, the 231-residue chain is Large ribosomal subunit protein uL1 (231 aa).

It belongs to the universal ribosomal protein uL1 family. In terms of assembly, part of the 50S ribosomal subunit.

Its function is as follows. Binds directly to 23S rRNA. The L1 stalk is quite mobile in the ribosome, and is involved in E site tRNA release. In terms of biological role, protein L1 is also a translational repressor protein, it controls the translation of the L11 operon by binding to its mRNA. This chain is Large ribosomal subunit protein uL1, found in Desulforudis audaxviator (strain MP104C).